The sequence spans 143 residues: ATP synthase subunit b', chloroplastic (143 aa).

A helical membrane pass occupies residues Leu12 to Tyr31.

It belongs to the ATPase B chain family. In terms of assembly, F-type ATPases have 2 components, F(1) - the catalytic core - and F(0) - the membrane proton channel. F(1) has five subunits: alpha(3), beta(3), gamma(1), delta(1), epsilon(1). F(0) has four main subunits: a(1), b(1), b'(1) and c(10-14). The alpha and beta chains form an alternating ring which encloses part of the gamma chain. F(1) is attached to F(0) by a central stalk formed by the gamma and epsilon chains, while a peripheral stalk is formed by the delta, b and b' chains.

The protein localises to the plastid. It localises to the chloroplast thylakoid membrane. Its function is as follows. F(1)F(0) ATP synthase produces ATP from ADP in the presence of a proton or sodium gradient. F-type ATPases consist of two structural domains, F(1) containing the extramembraneous catalytic core and F(0) containing the membrane proton channel, linked together by a central stalk and a peripheral stalk. During catalysis, ATP synthesis in the catalytic domain of F(1) is coupled via a rotary mechanism of the central stalk subunits to proton translocation. Component of the F(0) channel, it forms part of the peripheral stalk, linking F(1) to F(0). The b'-subunit is a diverged and duplicated form of b found in plants and photosynthetic bacteria. The polypeptide is ATP synthase subunit b', chloroplastic (Cyanidioschyzon merolae (strain NIES-3377 / 10D) (Unicellular red alga)).